Here is a 556-residue protein sequence, read N- to C-terminus: Glutamine--tRNA ligase (556 aa).

Residues Pro-34–His-44 carry the 'HIGH' region motif. ATP is bound by residues Glu-35–Asn-37 and His-41–Ser-47. Asp-67 and Tyr-212 together coordinate L-glutamine. Residues Thr-231, Arg-261–Leu-262, and Met-269–Lys-271 each bind ATP. The short motif at Val-268 to Arg-272 is the 'KMSKS' region element.

The protein belongs to the class-I aminoacyl-tRNA synthetase family. As to quaternary structure, monomer.

The protein localises to the cytoplasm. The catalysed reaction is tRNA(Gln) + L-glutamine + ATP = L-glutaminyl-tRNA(Gln) + AMP + diphosphate. The chain is Glutamine--tRNA ligase from Vibrio vulnificus (strain YJ016).